The following is a 179-amino-acid chain: Large ribosomal subunit protein uL5 (179 aa).

It belongs to the universal ribosomal protein uL5 family. In terms of assembly, part of the 50S ribosomal subunit; part of the 5S rRNA/L5/L18/L25 subcomplex. Contacts the 5S rRNA and the P site tRNA. Forms a bridge to the 30S subunit in the 70S ribosome.

Functionally, this is one of the proteins that bind and probably mediate the attachment of the 5S RNA into the large ribosomal subunit, where it forms part of the central protuberance. In the 70S ribosome it contacts protein S13 of the 30S subunit (bridge B1b), connecting the 2 subunits; this bridge is implicated in subunit movement. Contacts the P site tRNA; the 5S rRNA and some of its associated proteins might help stabilize positioning of ribosome-bound tRNAs. In Pectobacterium carotovorum subsp. carotovorum (strain PC1), this protein is Large ribosomal subunit protein uL5.